We begin with the raw amino-acid sequence, 359 residues long: Membrane-bound lytic murein transglycosylase C (359 aa).

The N-terminal stretch at 1–16 is a signal peptide; it reads MKKYLALALIAPLLIS. The N-palmitoyl cysteine moiety is linked to residue Cys17. Cys17 carries the S-diacylglycerol cysteine lipid modification.

It belongs to the transglycosylase Slt family.

The protein resides in the cell outer membrane. It catalyses the reaction Exolytic cleavage of the (1-&gt;4)-beta-glycosidic linkage between N-acetylmuramic acid (MurNAc) and N-acetylglucosamine (GlcNAc) residues in peptidoglycan, from either the reducing or the non-reducing ends of the peptidoglycan chains, with concomitant formation of a 1,6-anhydrobond in the MurNAc residue.. Functionally, murein-degrading enzyme. May play a role in recycling of muropeptides during cell elongation and/or cell division. This is Membrane-bound lytic murein transglycosylase C from Shigella flexneri serotype 5b (strain 8401).